A 23-amino-acid chain; its full sequence is Coenzyme PQQ synthesis protein A (23 aa).

The segment at residues 15–19 is a cross-link (pyrroloquinoline quinone (Glu-Tyr)); that stretch reads EVTLY.

The protein belongs to the PqqA family.

It participates in cofactor biosynthesis; pyrroloquinoline quinone biosynthesis. Its function is as follows. Required for coenzyme pyrroloquinoline quinone (PQQ) biosynthesis. PQQ is probably formed by cross-linking a specific glutamate to a specific tyrosine residue and excising these residues from the peptide. The polypeptide is Coenzyme PQQ synthesis protein A (Colwellia psychrerythraea (strain 34H / ATCC BAA-681) (Vibrio psychroerythus)).